Here is a 147-residue protein sequence, read N- to C-terminus: Transcriptional repressor NrdR (147 aa).

The segment at 3–34 (CLFCRSDDTKVIDSRTSEDGISIRRRRECQLC) is a zinc-finger region. Residues 46 to 136 (LTVIKRNGTS…VYQDFDSLED (91 aa)) form the ATP-cone domain.

Belongs to the NrdR family. Zn(2+) serves as cofactor.

Functionally, negatively regulates transcription of bacterial ribonucleotide reductase nrd genes and operons by binding to NrdR-boxes. The polypeptide is Transcriptional repressor NrdR (Tropheryma whipplei (strain TW08/27) (Whipple's bacillus)).